The sequence spans 478 residues: Spindle defective protein 3 (478 aa).

At 1-24 (MDQMTVEEKILEHQELEDGSSSFR) the chain is on the cytoplasmic side. A helical transmembrane segment spans residues 25–45 (WLVSSTVIAIGGATVALYISG). Residues 46-52 (KIDWKIP) lie on the Extracellular side of the membrane. The chain crosses the membrane as a helical span at residues 53–73 (AIEAGLALTAGGTITCGYLWF). Residues 74-478 (KKRVKTVRKL…LRRVDDDIIE (405 aa)) lie on the Cytoplasmic side of the membrane.

The protein localises to the mitochondrion. Its subcellular location is the mitochondrion outer membrane. In the first mitotic division in embryos, required for mitotic spindle alignment and asymmetric cell division. Required for motor-driven chromosome movement and homolog searching within the nucleus, and subsequently ensures homologous chromosome pairing during the prophase stage of meiosis. The polypeptide is Spindle defective protein 3 (Caenorhabditis elegans).